A 123-amino-acid polypeptide reads, in one-letter code: Ribosome-binding factor A (123 aa).

The protein belongs to the RbfA family. In terms of assembly, monomer. Binds 30S ribosomal subunits, but not 50S ribosomal subunits or 70S ribosomes.

The protein resides in the cytoplasm. One of several proteins that assist in the late maturation steps of the functional core of the 30S ribosomal subunit. Associates with free 30S ribosomal subunits (but not with 30S subunits that are part of 70S ribosomes or polysomes). Required for efficient processing of 16S rRNA. May interact with the 5'-terminal helix region of 16S rRNA. The polypeptide is Ribosome-binding factor A (Lactobacillus johnsonii (strain CNCM I-12250 / La1 / NCC 533)).